Consider the following 23-residue polypeptide: U1-ctenitoxin-Co1a (23 aa).

The cysteines at positions 10 and 20 are disulfide-linked.

In terms of tissue distribution, expressed by the venom gland.

It localises to the secreted. Insecticidal neurotoxin that reversibly inhibits the N-methyl-D-aspartate (NMDA)-subtype of ionotropic glutamate receptor (GRIN) and inhibits inactivation of insect sodium channels (Nav). In vivo, is highly toxic to insects. The polypeptide is U1-ctenitoxin-Co1a (Ctenus ornatus (Brazilian spider)).